The primary structure comprises 296 residues: GTPase Era (296 aa).

Residues 7–173 (KAGFVSIIGR…VDLVREHLPE (167 aa)) form the Era-type G domain. Residues 15 to 22 (GRPNVGKS) form a G1 region. 15 to 22 (GRPNVGKS) serves as a coordination point for GTP. A G2 region spans residues 41–45 (QTTRN). A G3 region spans residues 62 to 65 (DTPG). Residues 62–66 (DTPGI) and 122–125 (NKID) each bind GTP. The interval 122-125 (NKID) is G4. The tract at residues 152–154 (ISA) is G5. The KH type-2 domain maps to 204-281 (TNREVPYGTA…YLELFVQVQE (78 aa)).

It belongs to the TRAFAC class TrmE-Era-EngA-EngB-Septin-like GTPase superfamily. Era GTPase family. In terms of assembly, monomer.

Its subcellular location is the cytoplasm. It localises to the cell inner membrane. An essential GTPase that binds both GDP and GTP, with rapid nucleotide exchange. Plays a role in 16S rRNA processing and 30S ribosomal subunit biogenesis and possibly also in cell cycle regulation and energy metabolism. This chain is GTPase Era, found in Trichlorobacter lovleyi (strain ATCC BAA-1151 / DSM 17278 / SZ) (Geobacter lovleyi).